We begin with the raw amino-acid sequence, 111 residues long: Aspartate 1-decarboxylase (111 aa).

Ser-25 functions as the Schiff-base intermediate with substrate; via pyruvic acid in the catalytic mechanism. Ser-25 carries the pyruvic acid (Ser) modification. Thr-57 lines the substrate pocket. Catalysis depends on Tyr-58, which acts as the Proton donor. 73–75 (GPA) provides a ligand contact to substrate.

It belongs to the PanD family. Heterooctamer of four alpha and four beta subunits. Pyruvate is required as a cofactor. Is synthesized initially as an inactive proenzyme, which is activated by self-cleavage at a specific serine bond to produce a beta-subunit with a hydroxyl group at its C-terminus and an alpha-subunit with a pyruvoyl group at its N-terminus.

Its subcellular location is the cytoplasm. The enzyme catalyses L-aspartate + H(+) = beta-alanine + CO2. It functions in the pathway cofactor biosynthesis; (R)-pantothenate biosynthesis; beta-alanine from L-aspartate: step 1/1. Catalyzes the pyruvoyl-dependent decarboxylation of aspartate to produce beta-alanine. The sequence is that of Aspartate 1-decarboxylase from Francisella tularensis subsp. holarctica (strain LVS).